Consider the following 364-residue polypeptide: DNA replication and repair protein RecF (364 aa).

Position 30-37 (30-37) interacts with ATP; the sequence is GRNAQGKT.

It belongs to the RecF family.

The protein resides in the cytoplasm. Its function is as follows. The RecF protein is involved in DNA metabolism; it is required for DNA replication and normal SOS inducibility. RecF binds preferentially to single-stranded, linear DNA. It also seems to bind ATP. The sequence is that of DNA replication and repair protein RecF from Pelotomaculum thermopropionicum (strain DSM 13744 / JCM 10971 / SI).